Reading from the N-terminus, the 365-residue chain is Putative ankyrin repeat protein R903 (365 aa).

ANK repeat units lie at residues 38–67 (NINS…DIRF), 68–97 (QNNE…DIFI), 99–127 (NNFC…KFSN), 129–158 (SKPI…NINK), 184–213 (KFKD…GNIT), 214–243 (VSNN…RFPR), 245–273 (SNEL…SIVD), 275–298 (LLNI…LKNV), 299–328 (NLQK…NPDE), and 330–361 (RTYL…KLQS).

This Acanthamoeba polyphaga mimivirus (APMV) protein is Putative ankyrin repeat protein R903.